We begin with the raw amino-acid sequence, 315 residues long: 4-hydroxy-3-methylbut-2-enyl diphosphate reductase (315 aa).

Cys-12 lines the [4Fe-4S] cluster pocket. Residues His-41 and His-74 each contribute to the (2E)-4-hydroxy-3-methylbut-2-enyl diphosphate site. Positions 41 and 74 each coordinate dimethylallyl diphosphate. Residues His-41 and His-74 each contribute to the isopentenyl diphosphate site. Residue Cys-96 coordinates [4Fe-4S] cluster. His-124 provides a ligand contact to (2E)-4-hydroxy-3-methylbut-2-enyl diphosphate. His-124 provides a ligand contact to dimethylallyl diphosphate. His-124 contributes to the isopentenyl diphosphate binding site. Residue Glu-126 is the Proton donor of the active site. Thr-167 serves as a coordination point for (2E)-4-hydroxy-3-methylbut-2-enyl diphosphate. Cys-197 lines the [4Fe-4S] cluster pocket. Ser-225, Ser-226, Asn-227, and Ser-269 together coordinate (2E)-4-hydroxy-3-methylbut-2-enyl diphosphate. Positions 225, 226, 227, and 269 each coordinate dimethylallyl diphosphate. 4 residues coordinate isopentenyl diphosphate: Ser-225, Ser-226, Asn-227, and Ser-269.

The protein belongs to the IspH family. In terms of assembly, homodimer. The cofactor is [4Fe-4S] cluster.

The enzyme catalyses isopentenyl diphosphate + 2 oxidized [2Fe-2S]-[ferredoxin] + H2O = (2E)-4-hydroxy-3-methylbut-2-enyl diphosphate + 2 reduced [2Fe-2S]-[ferredoxin] + 2 H(+). It carries out the reaction dimethylallyl diphosphate + 2 oxidized [2Fe-2S]-[ferredoxin] + H2O = (2E)-4-hydroxy-3-methylbut-2-enyl diphosphate + 2 reduced [2Fe-2S]-[ferredoxin] + 2 H(+). Its pathway is isoprenoid biosynthesis; dimethylallyl diphosphate biosynthesis; dimethylallyl diphosphate from (2E)-4-hydroxy-3-methylbutenyl diphosphate: step 1/1. It participates in isoprenoid biosynthesis; isopentenyl diphosphate biosynthesis via DXP pathway; isopentenyl diphosphate from 1-deoxy-D-xylulose 5-phosphate: step 6/6. Catalyzes the conversion of 1-hydroxy-2-methyl-2-(E)-butenyl 4-diphosphate (HMBPP) into a mixture of isopentenyl diphosphate (IPP) and dimethylallyl diphosphate (DMAPP). Acts in the terminal step of the DOXP/MEP pathway for isoprenoid precursor biosynthesis. This Wigglesworthia glossinidia brevipalpis protein is 4-hydroxy-3-methylbut-2-enyl diphosphate reductase.